Consider the following 538-residue polypeptide: Syncytin-2 (538 aa).

An N-terminal signal peptide occupies residues 1-15 (MGLLLLVLILTPLLA). The Extracellular portion of the chain corresponds to 16-478 (AHRHPDFPLL…GWLNWEGTWK (463 aa)). Positions 43 to 46 (CWLC) match the CXXC motif. 3 disulfides stabilise this stretch: Cys43–Cys46, Cys43–Cys439, and Cys431–Cys438. Asn133, Asn146, Asn177, Asn220, Asn241, Asn247, Asn312, and Asn332 each carry an N-linked (GlcNAc...) asparagine glycan. Positions 354–374 (FIPLLAGLGIIAGTGTGIAGI) are fusion peptide. The short motif at 414–430 (LQNRRGLDMLTAAQGGI) is the CKS-17 element. Positions 431–439 (CLALDEKCC) match the CX6CC motif. Asn443 carries an N-linked (GlcNAc...) asparagine glycan. A helical membrane pass occupies residues 479 to 499 (WFSWVLPFTGPLVSLLLLLLF). Residues 500-538 (GPCLLNLITQFVLSRLQAIKLQTNLSAGCRPHNIQESPF) lie on the Cytoplasmic side of the membrane.

This sequence belongs to the gamma type-C retroviral envelope protein family. HERV class-I FRD env subfamily. The surface and transmembrane proteins form a heterodimer. They are attached by non-covalent interactions or by a labile interchain disulfide bond. Post-translationally, specific enzymatic cleavages in vivo yield the mature SU and TM proteins. In terms of processing, the CXXC motif is highly conserved across a broad range of retroviral envelope proteins. It is thought to participate in the formation of a labile disulfide bond possibly with the CX6CC motif present in the transmembrane protein.

Its subcellular location is the virion. The protein resides in the cell membrane. Functionally, this endogenous retroviral envelope protein has retained its original fusogenic properties and participates in trophoblast fusion and the formation of a syncytium during placenta morphogenesis. The interaction with MFSD2A is apparently important for this process. In terms of biological role, endogenous envelope proteins may have kept, lost or modified their original function during evolution but this one can still make pseudotypes with MLV, HIV-1 or SIV-1 virions and confer infectivity. Retroviral envelope proteins mediate receptor recognition and membrane fusion during early infection. The surface protein mediates receptor recognition, while the transmembrane protein anchors the envelope heterodimer to the viral membrane through one transmembrane domain. The other hydrophobic domain, called fusion peptide, mediates fusion of the viral membrane with the target cell membrane. In Pongo pygmaeus (Bornean orangutan), this protein is Syncytin-2 (ERVFRD-1).